A 332-amino-acid chain; its full sequence is Anthranilate phosphoribosyltransferase (332 aa).

Residues G79, 82–83 (GD), T87, 89–92 (NIST), 107–115 (KHGNRSVSS), and S119 contribute to the 5-phospho-alpha-D-ribose 1-diphosphate site. Position 79 (G79) interacts with anthranilate. Mg(2+) is bound at residue S91. Residue N110 participates in anthranilate binding. An anthranilate-binding site is contributed by R165. D223 and E224 together coordinate Mg(2+).

Belongs to the anthranilate phosphoribosyltransferase family. In terms of assembly, homodimer. It depends on Mg(2+) as a cofactor.

The catalysed reaction is N-(5-phospho-beta-D-ribosyl)anthranilate + diphosphate = 5-phospho-alpha-D-ribose 1-diphosphate + anthranilate. Its pathway is amino-acid biosynthesis; L-tryptophan biosynthesis; L-tryptophan from chorismate: step 2/5. Its function is as follows. Catalyzes the transfer of the phosphoribosyl group of 5-phosphorylribose-1-pyrophosphate (PRPP) to anthranilate to yield N-(5'-phosphoribosyl)-anthranilate (PRA). The protein is Anthranilate phosphoribosyltransferase of Vibrio vulnificus (strain CMCP6).